The chain runs to 255 residues: Fumarate reductase cytochrome b subunit (255 aa).

5 consecutive transmembrane segments (helical) span residues 33-53 (TGLI…SILI), 78-98 (IVSV…FLAL), 126-146 (WFIQ…HLFV), 168-188 (FWLL…IGLY), and 208-228 (IKWA…GAYI). Heme b contacts are provided by His44, His93, His143, and His182.

Belongs to the diheme cytochrome b FrdC family. Part of an enzyme complex containing three subunits: a flavoprotein (frdA), an iron-sulfur protein (frdB), and diheme cytochrome b (frdC). Heme b serves as cofactor.

Its subcellular location is the cell inner membrane. The fumarate reductase enzyme complex is required for fumarate respiration. This subunit anchors the complex in the membrane and binds a diheme cytochrome b. This chain is Fumarate reductase cytochrome b subunit (frdC), found in Helicobacter pylori (strain J99 / ATCC 700824) (Campylobacter pylori J99).